Here is a 429-residue protein sequence, read N- to C-terminus: 26S proteasome regulatory subunit 6A homolog (429 aa).

A disordered region spans residues methionine 1 to glutamine 21. Glycine 217 to threonine 224 contributes to the ATP binding site.

This sequence belongs to the AAA ATPase family.

The protein resides in the cytoplasm. The protein localises to the nucleus. The 26S proteasome is involved in the ATP-dependent degradation of ubiquitinated proteins. The regulatory (or ATPase) complex confers ATP dependency and substrate specificity to the 26S complex. The chain is 26S proteasome regulatory subunit 6A homolog (TBP1) from Oryza sativa subsp. japonica (Rice).